The following is an 892-amino-acid chain: Alanine--tRNA ligase (892 aa).

Zn(2+) contacts are provided by H574, H578, C676, and H680.

Belongs to the class-II aminoacyl-tRNA synthetase family. Zn(2+) serves as cofactor.

Its subcellular location is the cytoplasm. The catalysed reaction is tRNA(Ala) + L-alanine + ATP = L-alanyl-tRNA(Ala) + AMP + diphosphate. Functionally, catalyzes the attachment of alanine to tRNA(Ala) in a two-step reaction: alanine is first activated by ATP to form Ala-AMP and then transferred to the acceptor end of tRNA(Ala). Also edits incorrectly charged Ser-tRNA(Ala) and Gly-tRNA(Ala) via its editing domain. In Prochlorococcus marinus (strain SARG / CCMP1375 / SS120), this protein is Alanine--tRNA ligase.